We begin with the raw amino-acid sequence, 228 residues long: ATP synthase subunit a 2 (228 aa).

A run of 6 helical transmembrane segments spans residues 16–36 (VGTT…GAWL), 74–94 (VFPF…SSLI), 103–123 (DLSA…WFGI), 139–159 (SPFL…ALAV), 173–193 (LLVL…LHIV), and 194–214 (EALV…AGAI).

The protein belongs to the ATPase A chain family. As to quaternary structure, F-type ATPases have 2 components, CF(1) - the catalytic core - and CF(0) - the membrane proton channel. CF(1) has five subunits: alpha(3), beta(3), gamma(1), delta(1), epsilon(1). CF(0) has three main subunits: a(1), b(2) and c(9-12). The alpha and beta chains form an alternating ring which encloses part of the gamma chain. CF(1) is attached to CF(0) by a central stalk formed by the gamma and epsilon chains, while a peripheral stalk is formed by the delta and b chains.

It is found in the cell inner membrane. Functionally, key component of the proton channel; it plays a direct role in the translocation of protons across the membrane. The protein is ATP synthase subunit a 2 of Pelobacter propionicus (strain DSM 2379 / NBRC 103807 / OttBd1).